The sequence spans 374 residues: Outer membrane protein assembly factor BamC (374 aa).

Residues 1–22 (MSKFYKSGRVTTAVIVALSLSA) form the signal peptide. C23 is lipidated: N-palmitoyl cysteine. A lipid anchor (S-diacylglycerol cysteine) is attached at C23.

The protein belongs to the BamC family. In terms of assembly, part of the Bam complex.

It localises to the cell outer membrane. In terms of biological role, part of the outer membrane protein assembly complex, which is involved in assembly and insertion of beta-barrel proteins into the outer membrane. In Psychromonas ingrahamii (strain DSM 17664 / CCUG 51855 / 37), this protein is Outer membrane protein assembly factor BamC.